Consider the following 499-residue polypeptide: Glycerol kinase (499 aa).

Thr-13 contributes to the ADP binding site. ATP is bound by residues Thr-13, Thr-14, and Ser-15. Residue Thr-13 coordinates sn-glycerol 3-phosphate. Arg-17 provides a ligand contact to ADP. Positions 83, 84, 135, and 245 each coordinate sn-glycerol 3-phosphate. Positions 83, 84, 135, 245, and 246 each coordinate glycerol. Residues Thr-267 and Gly-310 each contribute to the ADP site. Residues Thr-267, Gly-310, Gln-314, and Gly-411 each coordinate ATP. Residues Gly-411 and Asn-415 each coordinate ADP.

This sequence belongs to the FGGY kinase family.

It carries out the reaction glycerol + ATP = sn-glycerol 3-phosphate + ADP + H(+). Its pathway is polyol metabolism; glycerol degradation via glycerol kinase pathway; sn-glycerol 3-phosphate from glycerol: step 1/1. Inhibited by fructose 1,6-bisphosphate (FBP). Its function is as follows. Key enzyme in the regulation of glycerol uptake and metabolism. Catalyzes the phosphorylation of glycerol to yield sn-glycerol 3-phosphate. The chain is Glycerol kinase from Xanthomonas axonopodis pv. citri (strain 306).